The sequence spans 227 residues: Probable methylthioribulose-1-phosphate dehydratase (227 aa).

Residue Cys87 coordinates substrate. Zn(2+) is bound by residues His105 and His107. The active-site Proton donor/acceptor is Glu129. A Zn(2+)-binding site is contributed by His185.

Belongs to the aldolase class II family. MtnB subfamily. It depends on Zn(2+) as a cofactor.

Its subcellular location is the cytoplasm. It catalyses the reaction 5-(methylsulfanyl)-D-ribulose 1-phosphate = 5-methylsulfanyl-2,3-dioxopentyl phosphate + H2O. It functions in the pathway amino-acid biosynthesis; L-methionine biosynthesis via salvage pathway; L-methionine from S-methyl-5-thio-alpha-D-ribose 1-phosphate: step 2/6. Functionally, catalyzes the dehydration of methylthioribulose-1-phosphate (MTRu-1-P) into 2,3-diketo-5-methylthiopentyl-1-phosphate (DK-MTP-1-P). The sequence is that of Probable methylthioribulose-1-phosphate dehydratase from Drosophila erecta (Fruit fly).